The sequence spans 485 residues: Glutamyl-tRNA(Gln) amidotransferase subunit A (485 aa).

Residues Lys-79 and Ser-154 each act as charge relay system in the active site. Catalysis depends on Ser-178, which acts as the Acyl-ester intermediate.

It belongs to the amidase family. GatA subfamily. In terms of assembly, heterotrimer of A, B and C subunits.

It catalyses the reaction L-glutamyl-tRNA(Gln) + L-glutamine + ATP + H2O = L-glutaminyl-tRNA(Gln) + L-glutamate + ADP + phosphate + H(+). Its function is as follows. Allows the formation of correctly charged Gln-tRNA(Gln) through the transamidation of misacylated Glu-tRNA(Gln) in organisms which lack glutaminyl-tRNA synthetase. The reaction takes place in the presence of glutamine and ATP through an activated gamma-phospho-Glu-tRNA(Gln). The chain is Glutamyl-tRNA(Gln) amidotransferase subunit A from Carboxydothermus hydrogenoformans (strain ATCC BAA-161 / DSM 6008 / Z-2901).